We begin with the raw amino-acid sequence, 297 residues long: N-acetylmuramic acid 6-phosphate etherase (297 aa).

Residues isoleucine 55–lysine 218 enclose the SIS domain. The active-site Proton donor is glutamate 83. Glutamate 114 is an active-site residue.

It belongs to the GCKR-like family. MurNAc-6-P etherase subfamily. As to quaternary structure, homodimer.

The enzyme catalyses N-acetyl-D-muramate 6-phosphate + H2O = N-acetyl-D-glucosamine 6-phosphate + (R)-lactate. It participates in amino-sugar metabolism; N-acetylmuramate degradation. Its function is as follows. Specifically catalyzes the cleavage of the D-lactyl ether substituent of MurNAc 6-phosphate, producing GlcNAc 6-phosphate and D-lactate. The sequence is that of N-acetylmuramic acid 6-phosphate etherase from Oenococcus oeni (strain ATCC BAA-331 / PSU-1).